The chain runs to 674 residues: Xaa-Pro aminopeptidase 2 (674 aa).

The N-terminal stretch at 1–22 is a signal peptide; that stretch reads MAQAYWQCYPWLVLLCACAWSY. N-linked (GlcNAc...) asparagine glycosylation is present at Asn65. Arg116 serves as a coordination point for substrate. Residues Asn278 and Asn293 are each glycosylated (N-linked (GlcNAc...) asparagine). A substrate-binding site is contributed by His430. Zn(2+)-binding residues include Asp450, Asp461, and His524. Substrate-binding residues include His524, His533, and Glu555. Residues Glu555 and Glu569 each coordinate Zn(2+). A lipid anchor (GPI-anchor amidated alanine) is attached at Ala650. Positions 651–674 are cleaved as a propeptide — removed in mature form; the sequence is SAPHTTSLASMWVASALAILSWSC.

It belongs to the peptidase M24B family. As to quaternary structure, homotrimer. Zn(2+) serves as cofactor. N-glycosylated. As to expression, expressed strongly in lung, liver and heart, and at lower levels in kidney, testis, brain, spleen and skeletal muscle.

Its subcellular location is the cell membrane. It catalyses the reaction Release of any N-terminal amino acid, including proline, that is linked to proline, even from a dipeptide or tripeptide.. Inhibited by the chelating agents 1,10-phenanthroline and EDTA. Inhibited by the thiol-containing compounds 2-mercaptoethanol and dithiothreitol. Also inhibited by apstatin, captopril and p-(ch1oromercuri)benzenesulfonic acid. Weakly inhibited by D,L-2-mercaptomethyl-3-guanidinoethylthiopropanoic acid and N-[l-(R,S)-carboxy-(2-phenylethyl)]-Ala-Ala-Phe-p-aminobenzoate. Inhibited by ramiprilat and enalaprilat, in a Mn(2+)-dependent manner. Metal ions have a complex substrate- and concentration-dependent effect on activity. Activity towards Arg-Pro-Pro and Gly-Pro-Hyp is stimulated by Mn(2+) ion concentrations of 10-100 uM and then inhibited at Mn(2+) concentrations of 1-2 mM. Mn(2+) concentrations in excess of 2 mM stimulate activity towards Gly-Pro-Hyp but inhibit activity towards Arg-Pro-Pro. Zn(2+) and Co(2+) ions also inhibit activity towards Arg-Pro-Pro at high concentrations. Activity towards bradykinin is inhibited by Mn(2+) concentrations in excess of 1 mM. In terms of biological role, membrane-bound metalloprotease which catalyzes the removal of a penultimate prolyl residue from the N-termini of peptides, such as Arg-Pro-Pro. May play a role in the metabolism of the vasodilator bradykinin. The protein is Xaa-Pro aminopeptidase 2 of Rattus norvegicus (Rat).